We begin with the raw amino-acid sequence, 184 residues long: Large ribosomal subunit protein uL5c (184 aa).

It belongs to the universal ribosomal protein uL5 family. In terms of assembly, part of the 50S ribosomal subunit; contacts the 5S rRNA.

It is found in the plastid. Its subcellular location is the chloroplast. Functionally, binds 5S rRNA, forms part of the central protuberance of the 50S subunit. This chain is Large ribosomal subunit protein uL5c (rpl5), found in Nephroselmis olivacea (Green alga).